Here is a 438-residue protein sequence, read N- to C-terminus: tRNA-2-methylthio-N(6)-dimethylallyladenosine synthase (438 aa).

In terms of domain architecture, MTTase N-terminal spans 4 to 120 (KKLYIDTVGC…VPEMVKDAEA (117 aa)). [4Fe-4S] cluster contacts are provided by Cys-13, Cys-49, Cys-83, Cys-158, Cys-162, and Cys-165. The region spanning 144-377 (GRKRVSAFVT…QAVHSRIHNE (234 aa)) is the Radical SAM core domain. Positions 377–438 (ETYVGSTQQV…YANSLLGELL (62 aa)) constitute a TRAM domain.

This sequence belongs to the methylthiotransferase family. MiaB subfamily. As to quaternary structure, monomer. [4Fe-4S] cluster serves as cofactor.

It is found in the cytoplasm. The catalysed reaction is N(6)-dimethylallyladenosine(37) in tRNA + (sulfur carrier)-SH + AH2 + 2 S-adenosyl-L-methionine = 2-methylsulfanyl-N(6)-dimethylallyladenosine(37) in tRNA + (sulfur carrier)-H + 5'-deoxyadenosine + L-methionine + A + S-adenosyl-L-homocysteine + 2 H(+). Functionally, catalyzes the methylthiolation of N6-(dimethylallyl)adenosine (i(6)A), leading to the formation of 2-methylthio-N6-(dimethylallyl)adenosine (ms(2)i(6)A) at position 37 in tRNAs that read codons beginning with uridine. The chain is tRNA-2-methylthio-N(6)-dimethylallyladenosine synthase from Trichlorobacter lovleyi (strain ATCC BAA-1151 / DSM 17278 / SZ) (Geobacter lovleyi).